The following is a 70-amino-acid chain: Putative venom toxin Ts29 (70 aa).

An N-terminal signal peptide occupies residues 1–20 (MSPLFVVLLIATTTFYHSDA).

Expressed by the venom gland.

It localises to the secreted. In Tityus serrulatus (Brazilian scorpion), this protein is Putative venom toxin Ts29.